Reading from the N-terminus, the 302-residue chain is AP-1 complex-associated regulatory protein (302 aa).

Phosphoserine is present on Ser-29. Positions 78-138 are interaction with AP1G1; it reads DSIAEKQKDL…ERQRIVQQYH (61 aa). The stretch at 80–138 forms a coiled coil; sequence IAEKQKDLDKKIQKELALQEEKLRLEEEALYAAQREAARAAKQRKLLEQERQRIVQQYH. The span at 188–206 shows a compositional bias: polar residues; it reads CDLMTKTKSTSGNDDSTSL. Residues 188–258 form a disordered region; that stretch reads CDLMTKTKST…TSASDDSNGL (71 aa). The tract at residues 199 to 215 is sufficient for association with the Arp2/3 complex; that stretch reads GNDDSTSLDLEWEDEEG. Positions 221-233 are enriched in basic and acidic residues; that stretch reads PMRERSKTEEDIL. Ser-226 bears the Phosphoserine mark. Phosphothreonine is present on Thr-228. Positions 242–255 are enriched in polar residues; the sequence is KKTGSNPTSASDDS.

As to quaternary structure, interacts (via coiled-coil domain) with AP1G1 (via GAE domain). Interacts with KIF5B. Associates with the Arp2/3 complex. Palmitoylated.

The protein localises to the golgi apparatus. It localises to the trans-Golgi network. Its subcellular location is the late endosome. It is found in the early endosome. In terms of biological role, necessary for adaptor protein complex 1 (AP-1)-dependent transport between the trans-Golgi network and endosomes. Regulates the membrane association of AP1G1/gamma1-adaptin, one of the subunits of the AP-1 adaptor complex. The direct interaction with AP1G1/gamma1-adaptin attenuates the release of the AP-1 complex from membranes. Regulates endosomal membrane traffic via association with AP-1 and KIF5B thus linking kinesin-based plus-end-directed microtubular transport to AP-1-dependent membrane traffic. May act as effector of AP-1 in calcium-induced endo-lysosome secretion. Inhibits Arp2/3 complex function; negatively regulates cell spreading, size and motility via intracellular sequestration of the Arp2/3 complex. The sequence is that of AP-1 complex-associated regulatory protein (AP1AR) from Homo sapiens (Human).